A 146-amino-acid polypeptide reads, in one-letter code: Basic phospholipase A2 (146 aa).

Residues 1–21 form the signal peptide; sequence MNPAHLLVLAAVCVSLLGASS. The propeptide occupies 22 to 27; sequence VPPRPL. Cystine bridges form between Cys38–Cys97, Cys52–Cys145, Cys54–Cys70, Cys69–Cys127, Cys76–Cys120, Cys86–Cys113, and Cys106–Cys118. Ca(2+) is bound by residues Tyr53, Gly55, and Gly57. The active site involves His73. Asp74 contacts Ca(2+). Asn109 carries N-linked (GlcNAc...) asparagine glycosylation. Asp121 is an active-site residue.

The protein belongs to the phospholipase A2 family. Group I subfamily. D49 sub-subfamily. Requires Ca(2+) as cofactor. Expressed by the venom gland.

The protein resides in the secreted. The enzyme catalyses a 1,2-diacyl-sn-glycero-3-phosphocholine + H2O = a 1-acyl-sn-glycero-3-phosphocholine + a fatty acid + H(+). Functionally, PLA2 catalyzes the calcium-dependent hydrolysis of the 2-acyl groups in 3-sn-phosphoglycerides. In Micrurus corallinus (Brazilian coral snake), this protein is Basic phospholipase A2.